The chain runs to 302 residues: AP-1 complex-associated regulatory protein (302 aa).

Position 29 is a phosphoserine (Ser-29). The tract at residues 78-138 is interaction with AP1G1; it reads DSIAEKQKDL…ERQRIVQQYH (61 aa). Residues 80 to 138 are a coiled coil; that stretch reads IAEKQKDLDKKIQKELALQEEKLRLEEEALYAAQREAARAAKQRKLLEQERQRIVQQYH. Polar residues predominate over residues 188–206; it reads CDLMTKTKSTSGNDDSTSL. Residues 188-258 are disordered; that stretch reads CDLMTKTKST…TSASDDSNGL (71 aa). Residues 199 to 215 form a sufficient for association with the Arp2/3 complex region; that stretch reads GNDDSTSLDLEWEDEEG. Basic and acidic residues predominate over residues 221–233; that stretch reads PMRERSKTEEDIL. The residue at position 226 (Ser-226) is a Phosphoserine. Residue Thr-228 is modified to Phosphothreonine. Residues 242 to 255 are compositionally biased toward polar residues; the sequence is KKTGSNPTSASDDS.

In terms of assembly, interacts (via coiled-coil domain) with AP1G1 (via GAE domain). Interacts with KIF5B. Associates with the Arp2/3 complex. Post-translationally, palmitoylated.

It is found in the golgi apparatus. It localises to the trans-Golgi network. The protein resides in the late endosome. Its subcellular location is the early endosome. Functionally, necessary for adaptor protein complex 1 (AP-1)-dependent transport between the trans-Golgi network and endosomes. Regulates the membrane association of AP1G1/gamma1-adaptin, one of the subunits of the AP-1 adaptor complex. The direct interaction with AP1G1/gamma1-adaptin attenuates the release of the AP-1 complex from membranes. Regulates endosomal membrane traffic via association with AP-1 and KIF5B thus linking kinesin-based plus-end-directed microtubular transport to AP-1-dependent membrane traffic. May act as effector of AP-1 in calcium-induced endo-lysosome secretion. Inhibits Arp2/3 complex function; negatively regulates cell spreading, size and motility via intracellular sequestration of the Arp2/3 complex. This chain is AP-1 complex-associated regulatory protein (AP1AR), found in Homo sapiens (Human).